The following is a 96-amino-acid chain: Large ribosomal subunit protein bL27 (96 aa).

Positions 1 to 9 (MLRLDLQFF) are excised as a propeptide. The disordered stretch occupies residues 14 to 35 (GVGSTKNGRDSQSKRLGAKRAD).

This sequence belongs to the bacterial ribosomal protein bL27 family. The N-terminus is cleaved by ribosomal processing cysteine protease Prp.

The sequence is that of Large ribosomal subunit protein bL27 from Bacillus cytotoxicus (strain DSM 22905 / CIP 110041 / 391-98 / NVH 391-98).